The chain runs to 499 residues: MFGDLASPFVLVLGLGESGLAMARWCARHGARARVADTREAPANLPALRAHVPDAEFIGGPFAPSLLEGVALVAISPGLSPLDAAVAALLDGARERAVPVWGEIELFARALAGLKLAQGYAPRVLAITGTNGKTTTTALAGALVQRAGKTVGVAGNISPSALDKLTECVDAGTLPDVWVLELSSFQLETTHTLDADAATILNITQDHLDWHGSMAAYAAAKGRIFGAGTVRVLNRQDADVMAFAGKRGGDVTFGTDEPATPEALGLLRDGGIPWIVLAEADDDDLPKPARRKKGDTTPAAPVPVRLKRLMPADALRIRGLHNATNAMAALALCRAIGLPASALLHGLRDYAGEPHRVELIAAFDDIEFFDDSKGTNVGATVAALSGLSKRVVLIAGGDGKGQDFSPLAAPVAQYARAVVLIGRDAPRIRAALADSGVELVEAATLEAAVQEAAARAQAGDAVLLSPACASFDMFRNYEHRAQVFHEAVAALAADRGVML.

ATP is bound at residue 129 to 135 (GTNGKTT).

The protein belongs to the MurCDEF family.

It localises to the cytoplasm. The catalysed reaction is UDP-N-acetyl-alpha-D-muramoyl-L-alanine + D-glutamate + ATP = UDP-N-acetyl-alpha-D-muramoyl-L-alanyl-D-glutamate + ADP + phosphate + H(+). It participates in cell wall biogenesis; peptidoglycan biosynthesis. Functionally, cell wall formation. Catalyzes the addition of glutamate to the nucleotide precursor UDP-N-acetylmuramoyl-L-alanine (UMA). The sequence is that of UDP-N-acetylmuramoylalanine--D-glutamate ligase from Ralstonia nicotianae (strain ATCC BAA-1114 / GMI1000) (Ralstonia solanacearum).